The following is a 224-amino-acid chain: Ethylene-inducing xylanase 5 (224 aa).

The first 16 residues, 1–16 (MLKSLVVLLLTSRVIA), serve as a signal peptide directing secretion. Residues 32 to 218 (QATPNSQGTH…SSGFAEMTVA (187 aa)) enclose the GH11 domain. An N-linked (GlcNAc...) asparagine glycan is attached at Asn-88. Glu-117 (nucleophile) is an active-site residue. The active-site Proton donor is the Glu-205.

This sequence belongs to the glycosyl hydrolase 11 (cellulase G) family.

It catalyses the reaction Endohydrolysis of (1-&gt;4)-beta-D-xylosidic linkages in xylans.. Its pathway is glycan degradation; xylan degradation. Its function is as follows. Endo-1,4-beta-xylanase involved in the hydrolysis of xylan, a major structural heterogeneous polysaccharide found in plant biomass representing the second most abundant polysaccharide in the biosphere, after cellulose. May act as an elicitor of plant defense responses in certain plants but does not exhibit any cell death when transiently expressed in N.benthamiana. This chain is Ethylene-inducing xylanase 5, found in Verticillium dahliae (strain VdLs.17 / ATCC MYA-4575 / FGSC 10137) (Verticillium wilt).